The chain runs to 343 residues: L-threonine 3-dehydrogenase (343 aa).

Cys38 lines the Zn(2+) pocket. Residues Thr40 and His43 each act as charge relay system in the active site. Zn(2+) contacts are provided by His63, Glu64, Cys93, Cys96, Cys99, and Cys107. NAD(+) is bound by residues Ile175, Asp195, Arg200, 262–264 (LGI), and 286–287 (IY).

The protein belongs to the zinc-containing alcohol dehydrogenase family. As to quaternary structure, homotetramer. Zn(2+) is required as a cofactor.

The protein localises to the cytoplasm. The catalysed reaction is L-threonine + NAD(+) = (2S)-2-amino-3-oxobutanoate + NADH + H(+). It functions in the pathway amino-acid degradation; L-threonine degradation via oxydo-reductase pathway; glycine from L-threonine: step 1/2. Functionally, catalyzes the NAD(+)-dependent oxidation of L-threonine to 2-amino-3-ketobutyrate. This chain is L-threonine 3-dehydrogenase, found in Burkholderia thailandensis (strain ATCC 700388 / DSM 13276 / CCUG 48851 / CIP 106301 / E264).